A 478-amino-acid polypeptide reads, in one-letter code: H(+)/Cl(-) exchange transporter ClcA (478 aa).

Over 1–32 the chain is Cytoplasmic; it reads MTHSTQQLSPEGVAEGKRGRLIRELVNRDKTP. Residues 33 to 69 form a helical membrane-spanning segment; the sequence is LIILIMAAVVGVVTGLLGVAFDRGVDWVQQQRLLALA. Over 70–76 the chain is Periplasmic; it reads NVADSAL. A helical membrane pass occupies residues 77-100; it reads LVWPLAFIMSALLAMMGYFLVSRF. The Selectivity filter part_1 signature appears at 106–110; the sequence is GSGIP. A chloride-binding site is contributed by Ser107. Residues 109 to 116 constitute an intramembrane region (helical); sequence IPEIEGAM. At 117-123 the chain is on the cytoplasmic side; that stretch reads EEMRPVR. The next 2 helical transmembrane spans lie at 124 to 141 and 148 to 166; these read WWRV…TLGA and EGPM…VDIF. Positions 146-150 match the Selectivity filter part_2 motif; sequence GREGP. Over 167–176 the chain is Cytoplasmic; that stretch reads RLRSPEARHS. Intramembrane regions (helical) lie at residues 177–189 and 193–201; these read LLAT…LSAA and PLAGILFVI. Residues 202–214 lie on the Cytoplasmic side of the membrane; sequence EEMRSQFRYSLVS. Residues 215–232 form a helical membrane-spanning segment; it reads IKAVFIGVITSTIVYRYF. Over 233–252 the chain is Periplasmic; the sequence is NGERAIIEVGKLSDAPLNTL. Residues 253 to 281 traverse the membrane as a helical segment; it reads WLYLLLGIIFGAVGVIFNALIFRTQDMFV. Residues 282 to 287 are Cytoplasmic-facing; the sequence is RFHGGD. A helical transmembrane segment spans residues 288–309; the sequence is WRKLVLIGGLLGGMCGLLALLH. At 310–329 the chain is on the periplasmic side; that stretch reads GNAVGGGFALIPIAAAGNFS. Helical transmembrane passes span 330 to 349 and 355 to 376; these read IGML…LCFG and GIFA…LSCA. The Selectivity filter part_3 motif lies at 355 to 359; sequence GIFAP. Chloride-binding residues include Ile356 and Phe357. Topologically, residues 377–386 are periplasmic; the sequence is HFFPQYGIEA. Positions 387–401 form an intramembrane region, helical; that stretch reads GTFAIAGMGALFAAS. An intramembrane region (note=Loop between two helices) is located at residues 402–404; that stretch reads VRA. The segment at residues 405–416 is an intramembrane region (helical); it reads PLTGIVLVLEMT. An intramembrane region (note=Loop between two helices) is located at residues 417-421; that stretch reads DNYQL. A helical membrane pass occupies residues 422 to 438; that stretch reads ILPMIVTCLGATLIAQF. Over 439 to 478 the chain is Cytoplasmic; sequence MGGKPLYSAILARTLAKQEQARATVIAQEPAVENTPQTGR. Tyr445 is a binding site for chloride.

Belongs to the chloride channel (TC 2.A.49) family. ClcA subfamily. In terms of assembly, homodimer.

The protein resides in the cell inner membrane. It catalyses the reaction 2 chloride(in) + H(+)(out) = 2 chloride(out) + H(+)(in). In terms of biological role, proton-coupled chloride transporter. Functions as antiport system and exchanges two chloride ions for 1 proton. Probably acts as an electrical shunt for an outwardly-directed proton pump that is linked to amino acid decarboxylation, as part of the extreme acid resistance (XAR) response. The protein is H(+)/Cl(-) exchange transporter ClcA of Yersinia pseudotuberculosis serotype IB (strain PB1/+).